Reading from the N-terminus, the 87-residue chain is Phosphoribosyl-ATP pyrophosphatase (87 aa).

The protein belongs to the PRA-PH family.

It localises to the cytoplasm. It catalyses the reaction 1-(5-phospho-beta-D-ribosyl)-ATP + H2O = 1-(5-phospho-beta-D-ribosyl)-5'-AMP + diphosphate + H(+). The protein operates within amino-acid biosynthesis; L-histidine biosynthesis; L-histidine from 5-phospho-alpha-D-ribose 1-diphosphate: step 2/9. This Bifidobacterium longum (strain DJO10A) protein is Phosphoribosyl-ATP pyrophosphatase.